The sequence spans 396 residues: Cyclic GMP-AMP synthase-like receptor (396 aa).

ATP is bound by residues Ser-63 and 75–77 (EFD). Positions 75, 77, and 194 each coordinate Mg(2+). Position 194 (Asp-194) interacts with GTP. ATP is bound by residues 241–244 (QEQE), Lys-262, and 275–279 (SYYLK). Positions 286, 287, and 292 each coordinate Mn(2+). The tract at residues 376–396 (IMNGGNPQQSANAENGSCLSM) is disordered. Residues 380-396 (GNPQQSANAENGSCLSM) are compositionally biased toward polar residues.

The protein belongs to the mab-21 family. Mg(2+) is required as a cofactor. It depends on Mn(2+) as a cofactor.

It catalyses the reaction GTP + ATP = 2',3'-cGAMP + 2 diphosphate. The catalysed reaction is GTP + ATP = pppGp(2'-5')A + diphosphate. The enzyme catalyses pppGp(2'-5')A = 2',3'-cGAMP + diphosphate. Functionally, nucleotidyltransferase that catalyzes the formation of cyclic GMP-AMP (2',3'-cGAMP) from ATP and GTP and plays a key role in innate immunity. Acts as a key sensor of double-stranded RNA (dsRNA), the presence of dsRNA in the cytoplasm being a danger signal that triggers the immune responses. Directly binds dsRNA, activating the nucleotidyltransferase activity, leading to synthesis of 2',3'-cGAMP, a second messenger that binds to and activates Sting, thereby triggering the immune response via activation of the NF-kappa-B transcription factor. This Aethina tumida (Small hive beetle) protein is Cyclic GMP-AMP synthase-like receptor.